We begin with the raw amino-acid sequence, 587 residues long: D-lactate dehydrogenase [cytochrome] 1, mitochondrial (587 aa).

Positions 146-327 (SPEQRPRIIL…TEATVKCHVK (182 aa)) constitute an FAD-binding PCMH-type domain.

The protein belongs to the FAD-binding oxidoreductase/transferase type 4 family. It depends on FAD as a cofactor.

It localises to the mitochondrion inner membrane. It catalyses the reaction (R)-lactate + 2 Fe(III)-[cytochrome c] = 2 Fe(II)-[cytochrome c] + pyruvate + 2 H(+). Its function is as follows. Catalyzes the stereospecific oxidation of D-lactate to pyruvate. The chain is D-lactate dehydrogenase [cytochrome] 1, mitochondrial from Saccharomyces cerevisiae (strain ATCC 204508 / S288c) (Baker's yeast).